Reading from the N-terminus, the 337-residue chain is Anthranilate phosphoribosyltransferase (337 aa).

5-phospho-alpha-D-ribose 1-diphosphate is bound by residues glycine 81, 84 to 85 (GD), threonine 89, 91 to 94 (NIST), 109 to 117 (KHGNRALSS), and threonine 121. Position 81 (glycine 81) interacts with anthranilate. Serine 93 is a Mg(2+) binding site. Asparagine 112 is a binding site for anthranilate. Arginine 167 contacts anthranilate. Mg(2+) contacts are provided by aspartate 225 and glutamate 226.

It belongs to the anthranilate phosphoribosyltransferase family. Homodimer. It depends on Mg(2+) as a cofactor.

It catalyses the reaction N-(5-phospho-beta-D-ribosyl)anthranilate + diphosphate = 5-phospho-alpha-D-ribose 1-diphosphate + anthranilate. It participates in amino-acid biosynthesis; L-tryptophan biosynthesis; L-tryptophan from chorismate: step 2/5. Its function is as follows. Catalyzes the transfer of the phosphoribosyl group of 5-phosphorylribose-1-pyrophosphate (PRPP) to anthranilate to yield N-(5'-phosphoribosyl)-anthranilate (PRA). In Sinorhizobium medicae (strain WSM419) (Ensifer medicae), this protein is Anthranilate phosphoribosyltransferase.